Consider the following 876-residue polypeptide: Leucine--tRNA ligase (876 aa).

Positions 42 to 52 match the 'HIGH' region motif; that stretch reads PYPSGKLHMGH. The 'KMSKS' region signature appears at 634 to 638; the sequence is KMSKS. ATP is bound at residue K637.

This sequence belongs to the class-I aminoacyl-tRNA synthetase family.

It localises to the cytoplasm. It carries out the reaction tRNA(Leu) + L-leucine + ATP = L-leucyl-tRNA(Leu) + AMP + diphosphate. The chain is Leucine--tRNA ligase from Neisseria gonorrhoeae (strain ATCC 700825 / FA 1090).